A 594-amino-acid chain; its full sequence is MNADFLGLLLLYLAILLCAAPLLGRHIRQAMNGERTWLTAWGQPLERGLYRLAGVDPAAEMDWRRYAVAMLVFNVLGVLAVYALQRLQGWLPLNPAGLPGVAPDSALNTAISFVTNTNWQGYAGESTMSYLTQMLALTVQNFVSAATGIAVLIALVRGLARHSAATLGNFWADLVRATLYVLLPLSFILALALVSQGVVQNLDPYVEAQTVQAQQYETARLDAQGQPMTGPAGQPLTDTVVTRVQNLPMGPVASQEAIKLLGTNGGGFFNANSAHPYENPNAWSNLLEMLAILLIPAALCWTFGEMVGSRRQGVAILAAMTVLFAGFSASAAYFEQQPTPALRQAEAALLADGGNLEGKEARFGVAATALFATVTTAASCGAVNGMHDSFSALGGVTPLLQMQLGEVIYGGVGSGLYGMLAFAILAVFIAGLMIGRTPEYLGKKIEALDMQMVALVILATPALVLAGTAVAVLADAGRAGVLNPGAHGFSEILYAMSSAANNNGSAFAGLSANTPFYNVLLGLAMWFGRYTIIVAILALAGSLAAKPRLPASVGGMPTTGPLFVALLVGAVLLVGALTYVPALALGPVAEHLQP.

10 helical membrane passes run 3–23, 67–87, 136–156, 179–199, 287–307, 314–334, 415–435, 453–473, 519–539, and 562–582; these read ADFL…APLL, AVAM…LQRL, ALTV…IALV, LYVL…QGVV, LEML…GEMV, VAIL…AAYF, GLYG…LMIG, VALV…VAVL, VLLG…ILAL, and LFVA…YVPA.

Belongs to the KdpA family. The system is composed of three essential subunits: KdpA, KdpB and KdpC.

The protein localises to the cell inner membrane. Part of the high-affinity ATP-driven potassium transport (or Kdp) system, which catalyzes the hydrolysis of ATP coupled with the electrogenic transport of potassium into the cytoplasm. This subunit binds the periplasmic potassium ions and delivers the ions to the membrane domain of KdpB through an intramembrane tunnel. This Bordetella bronchiseptica (strain ATCC BAA-588 / NCTC 13252 / RB50) (Alcaligenes bronchisepticus) protein is Potassium-transporting ATPase potassium-binding subunit.